A 3354-amino-acid polypeptide reads, in one-letter code: Cadherin-23 (3354 aa).

Residues 1-23 (MGRHVATSCHVAWLLVLISGCWG) form the signal peptide. Residues 24–3064 (QVNRLPFFTN…SVRLPDDMSA (3041 aa)) lie on the Extracellular side of the membrane. Cadherin domains lie at 34–132 (HFFD…APTF), 133–236 (HNQP…DPIF), 237–348 (INLP…APEF), 349–460 (NSSE…RPIF), 461–561 (SQPL…VPTF), 562–671 (QKDA…PPTF), 672–784 (SKPA…APYY), 779–890 (KDAP…DPTF), 891–995 (QNLP…TPTF), 996–1102 (FPAV…RPIF), 1103–1208 (LQSS…APVF), 1210–1313 (QQQY…AVQF), 1314–1418 (SNAS…SPRF), 1420–1527 (FTSD…PPVI), 1529–1634 (SPFG…APMF), 1635–1744 (QQPH…VPTF), 1745–1851 (PRDY…DPVL), 1852–1959 (LNLP…HPLF), 1960–2069 (TKST…RPTF), 2070–2174 (SPAT…RPEF), 2175–2293 (LNPI…TPQF), 2297–2402 (GITY…NPIF), 2403–2509 (DQPS…RPQF), 2510–2611 (SKPQ…RPVF), 2614–2722 (PPNG…EPLF), 2729–2846 (SPQY…PPRF), and 2847–2975 (TKAE…EEEF). Residues Asn-155 and Asn-206 are each glycosylated (N-linked (GlcNAc...) asparagine). Residues Asn-349, Asn-393, Asn-434, Asn-466, Asn-472, Asn-652, Asn-694, Asn-765, Asn-810, Asn-827, Asn-941, Asn-1001, Asn-1018, Asn-1171, Asn-1282, Asn-1315, Asn-1473, Asn-1534, Asn-1651, Asn-1667, Asn-1818, Asn-1857, Asn-1889, Asn-1902, Asn-2013, Asn-2050, Asn-2129, Asn-2168, Asn-2195, Asn-2263, Asn-2357, and Asn-2369 are each glycosylated (N-linked (GlcNAc...) asparagine). N-linked (GlcNAc...) asparagine glycans are attached at residues Asn-2616, Asn-2749, Asn-2808, Asn-2877, Asn-2896, Asn-2941, and Asn-2981. A helical transmembrane segment spans residues 3065 to 3085 (LQMAIIVLAILLFLAAMLFVL). Over 3086–3354 (MNWYYRTVHK…METPLEITEL (269 aa)) the chain is Cytoplasmic.

In terms of assembly, antiparallel heterodimer with PCDH15. Interacts with USH1C and USH1G. As to expression, particularly strong expression in the retina. Found also in the cochlea.

The protein localises to the cell membrane. Cadherins are calcium-dependent cell adhesion proteins. They preferentially interact with themselves in a homophilic manner in connecting cells. CDH23 is required for establishing and/or maintaining the proper organization of the stereocilia bundle of hair cells in the cochlea and the vestibule during late embryonic/early postnatal development. It is part of the functional network formed by USH1C, USH1G, CDH23 and MYO7A that mediates mechanotransduction in cochlear hair cells. Required for normal hearing. This is Cadherin-23 from Homo sapiens (Human).